The primary structure comprises 297 residues: Phosphatidylglycerol--prolipoprotein diacylglyceryl transferase (297 aa).

A run of 4 helical transmembrane segments spans residues 20–40, 50–70, 105–125, and 133–153; these read FLTI…GLFV, INPL…IIGA, AVWE…LSII, and IHLK…QSIG. Residue R154 coordinates a 1,2-diacyl-sn-glycero-3-phospho-(1'-sn-glycerol). 3 helical membrane passes run 193–213, 225–245, and 266–286; these read PTFL…IFVF, GFIS…IEGL, and AQFI…FLRL.

It belongs to the Lgt family.

It is found in the cell inner membrane. The catalysed reaction is L-cysteinyl-[prolipoprotein] + a 1,2-diacyl-sn-glycero-3-phospho-(1'-sn-glycerol) = an S-1,2-diacyl-sn-glyceryl-L-cysteinyl-[prolipoprotein] + sn-glycerol 1-phosphate + H(+). Its pathway is protein modification; lipoprotein biosynthesis (diacylglyceryl transfer). Its function is as follows. Catalyzes the transfer of the diacylglyceryl group from phosphatidylglycerol to the sulfhydryl group of the N-terminal cysteine of a prolipoprotein, the first step in the formation of mature lipoproteins. The protein is Phosphatidylglycerol--prolipoprotein diacylglyceryl transferase of Prochlorococcus marinus (strain MIT 9312).